Here is a 117-residue protein sequence, read N- to C-terminus: MDYFLIGIGGACGSIVRYKIGDIISKRTKSKFPWGTFIINITGAFLLGIITKSGAGKNLSMILADGFLGAYTTFSTFMYEGFNLFENKKKLNALIYILSSIIIGILGFYMGEFISQL.

4 helical membrane-spanning segments follow: residues 4–24 (FLIG…GDII), 31–51 (KFPW…GIIT), 59–79 (LSMI…TFMY), and 94–114 (LIYI…GEFI). Gly-69 and Thr-72 together coordinate Na(+).

The protein belongs to the fluoride channel Fluc/FEX (TC 1.A.43) family.

It is found in the cell membrane. It catalyses the reaction fluoride(in) = fluoride(out). Na(+) is not transported, but it plays an essential structural role and its presence is essential for fluoride channel function. Functionally, fluoride-specific ion channel. Important for reducing fluoride concentration in the cell, thus reducing its toxicity. The protein is Fluoride-specific ion channel FluC 2 of Clostridium acetobutylicum (strain ATCC 824 / DSM 792 / JCM 1419 / IAM 19013 / LMG 5710 / NBRC 13948 / NRRL B-527 / VKM B-1787 / 2291 / W).